A 462-amino-acid chain; its full sequence is Cysteine--tRNA ligase (462 aa).

Zn(2+) is bound at residue cysteine 29. The 'HIGH' region signature appears at 31–41 (PTVYDHAHIGN). Positions 214, 239, and 243 each coordinate Zn(2+). The short motif at 272 to 276 (KMSKS) is the 'KMSKS' region element. Lysine 275 lines the ATP pocket.

This sequence belongs to the class-I aminoacyl-tRNA synthetase family. As to quaternary structure, monomer. Zn(2+) is required as a cofactor.

The protein resides in the cytoplasm. The catalysed reaction is tRNA(Cys) + L-cysteine + ATP = L-cysteinyl-tRNA(Cys) + AMP + diphosphate. The protein is Cysteine--tRNA ligase of Xanthobacter autotrophicus (strain ATCC BAA-1158 / Py2).